Reading from the N-terminus, the 459-residue chain is uncharacterized protein (459 aa).

The B12-binding domain occupies 13–145 (TESAIKRVVG…DALSKGRELK (133 aa)). Residues 188 to 402 (ADGVPFGVVM…MNWRKYTTID (215 aa)) form the Radical SAM core domain. [4Fe-4S] cluster-binding residues include Cys202, Cys206, and Cys209.

It belongs to the methyltransferase superfamily. The cofactor is [4Fe-4S] cluster.

This is an uncharacterized protein from Pyrococcus horikoshii (strain ATCC 700860 / DSM 12428 / JCM 9974 / NBRC 100139 / OT-3).